The primary structure comprises 351 residues: Alanine racemase (351 aa).

K34 functions as the Proton acceptor; specific for D-alanine in the catalytic mechanism. K34 carries the N6-(pyridoxal phosphate)lysine modification. R126 serves as a coordination point for substrate. Y248 acts as the Proton acceptor; specific for L-alanine in catalysis. M296 serves as a coordination point for substrate.

It belongs to the alanine racemase family. Pyridoxal 5'-phosphate is required as a cofactor.

It carries out the reaction L-alanine = D-alanine. Its pathway is amino-acid biosynthesis; D-alanine biosynthesis; D-alanine from L-alanine: step 1/1. Functionally, catalyzes the interconversion of L-alanine and D-alanine. May also act on other amino acids. The chain is Alanine racemase (alr) from Deinococcus radiodurans (strain ATCC 13939 / DSM 20539 / JCM 16871 / CCUG 27074 / LMG 4051 / NBRC 15346 / NCIMB 9279 / VKM B-1422 / R1).